A 271-amino-acid chain; its full sequence is Formamidopyrimidine-DNA glycosylase (271 aa).

Residue proline 2 is the Schiff-base intermediate with DNA of the active site. The Proton donor role is filled by glutamate 3. Lysine 58 functions as the Proton donor; for beta-elimination activity in the catalytic mechanism. The DNA site is built by histidine 91, arginine 110, and arginine 152. The FPG-type zinc-finger motif lies at 237–271 (QIYGRSAHPCPICGTPIRLERIGQRASYYCTQCQH). Arginine 261 functions as the Proton donor; for delta-elimination activity in the catalytic mechanism.

Belongs to the FPG family. As to quaternary structure, monomer. Zn(2+) is required as a cofactor.

The catalysed reaction is Hydrolysis of DNA containing ring-opened 7-methylguanine residues, releasing 2,6-diamino-4-hydroxy-5-(N-methyl)formamidopyrimidine.. The enzyme catalyses 2'-deoxyribonucleotide-(2'-deoxyribose 5'-phosphate)-2'-deoxyribonucleotide-DNA = a 3'-end 2'-deoxyribonucleotide-(2,3-dehydro-2,3-deoxyribose 5'-phosphate)-DNA + a 5'-end 5'-phospho-2'-deoxyribonucleoside-DNA + H(+). Functionally, involved in base excision repair of DNA damaged by oxidation or by mutagenic agents. Acts as a DNA glycosylase that recognizes and removes damaged bases. Has a preference for oxidized purines, such as 7,8-dihydro-8-oxoguanine (8-oxoG). Has AP (apurinic/apyrimidinic) lyase activity and introduces nicks in the DNA strand. Cleaves the DNA backbone by beta-delta elimination to generate a single-strand break at the site of the removed base with both 3'- and 5'-phosphates. This is Formamidopyrimidine-DNA glycosylase from Nitrosococcus oceani (strain ATCC 19707 / BCRC 17464 / JCM 30415 / NCIMB 11848 / C-107).